We begin with the raw amino-acid sequence, 373 residues long: 4-hydroxy-3-methylbut-2-en-1-yl diphosphate synthase (flavodoxin) (373 aa).

Residues Cys-270, Cys-273, Cys-305, and Glu-312 each contribute to the [4Fe-4S] cluster site.

Belongs to the IspG family. The cofactor is [4Fe-4S] cluster.

The catalysed reaction is (2E)-4-hydroxy-3-methylbut-2-enyl diphosphate + oxidized [flavodoxin] + H2O + 2 H(+) = 2-C-methyl-D-erythritol 2,4-cyclic diphosphate + reduced [flavodoxin]. The protein operates within isoprenoid biosynthesis; isopentenyl diphosphate biosynthesis via DXP pathway; isopentenyl diphosphate from 1-deoxy-D-xylulose 5-phosphate: step 5/6. In terms of biological role, converts 2C-methyl-D-erythritol 2,4-cyclodiphosphate (ME-2,4cPP) into 1-hydroxy-2-methyl-2-(E)-butenyl 4-diphosphate. In Pectobacterium atrosepticum (strain SCRI 1043 / ATCC BAA-672) (Erwinia carotovora subsp. atroseptica), this protein is 4-hydroxy-3-methylbut-2-en-1-yl diphosphate synthase (flavodoxin).